The sequence spans 756 residues: Polyribonucleotide nucleotidyltransferase (756 aa).

Residues aspartate 492 and aspartate 498 each contribute to the Mg(2+) site. The region spanning 559 to 618 (PQHAEVFVNPDVIRIIIGPGGKNIKAITAATGASIDIEDSGKVSIFAPTYEAMEMAREMV) is the KH domain. An S1 motif domain is found at 628–702 (GKNYVGKVRK…SRKAVLLEEQ (75 aa)). The disordered stretch occupies residues 703–756 (GVEWNPEDTARPSGPPRDRGDRGDRGGRGDRGGDRRGGDRGGRGGDRGRGGDRR). The span at 718–756 (PRDRGDRGDRGGRGDRGGDRRGGDRGGRGGDRGRGGDRR) shows a compositional bias: basic and acidic residues.

This sequence belongs to the polyribonucleotide nucleotidyltransferase family. It depends on Mg(2+) as a cofactor.

It localises to the cytoplasm. The catalysed reaction is RNA(n+1) + phosphate = RNA(n) + a ribonucleoside 5'-diphosphate. In terms of biological role, involved in mRNA degradation. Catalyzes the phosphorolysis of single-stranded polyribonucleotides processively in the 3'- to 5'-direction. This Nitratidesulfovibrio vulgaris (strain DSM 19637 / Miyazaki F) (Desulfovibrio vulgaris) protein is Polyribonucleotide nucleotidyltransferase.